A 776-amino-acid polypeptide reads, in one-letter code: 1,4-alpha-glucan branching enzyme GlgB (776 aa).

Catalysis depends on Asp431, which acts as the Nucleophile. The active-site Proton donor is Glu484.

Belongs to the glycosyl hydrolase 13 family. GlgB subfamily. As to quaternary structure, monomer.

The enzyme catalyses Transfers a segment of a (1-&gt;4)-alpha-D-glucan chain to a primary hydroxy group in a similar glucan chain.. It functions in the pathway glycan biosynthesis; glycogen biosynthesis. Its function is as follows. Catalyzes the formation of the alpha-1,6-glucosidic linkages in glycogen by scission of a 1,4-alpha-linked oligosaccharide from growing alpha-1,4-glucan chains and the subsequent attachment of the oligosaccharide to the alpha-1,6 position. This chain is 1,4-alpha-glucan branching enzyme GlgB, found in Trichodesmium erythraeum (strain IMS101).